The primary structure comprises 324 residues: o-succinylbenzoate synthase (324 aa).

Residue K135 is the Proton donor of the active site. Mg(2+)-binding residues include D163, E192, and D215. Residue K237 is the Proton acceptor of the active site.

The protein belongs to the mandelate racemase/muconate lactonizing enzyme family. MenC type 1 subfamily. A divalent metal cation is required as a cofactor.

The enzyme catalyses (1R,6R)-6-hydroxy-2-succinyl-cyclohexa-2,4-diene-1-carboxylate = 2-succinylbenzoate + H2O. Its pathway is quinol/quinone metabolism; 1,4-dihydroxy-2-naphthoate biosynthesis; 1,4-dihydroxy-2-naphthoate from chorismate: step 4/7. It functions in the pathway quinol/quinone metabolism; menaquinone biosynthesis. Its function is as follows. Converts 2-succinyl-6-hydroxy-2,4-cyclohexadiene-1-carboxylate (SHCHC) to 2-succinylbenzoate (OSB). The polypeptide is o-succinylbenzoate synthase (Aliivibrio salmonicida (strain LFI1238) (Vibrio salmonicida (strain LFI1238))).